Here is a 421-residue protein sequence, read N- to C-terminus: UDP-N-acetylglucosamine 1-carboxyvinyltransferase (421 aa).

22–23 (KN) lines the phosphoenolpyruvate pocket. Arg-95 provides a ligand contact to UDP-N-acetyl-alpha-D-glucosamine. Cys-119 functions as the Proton donor in the catalytic mechanism. Cys-119 carries the post-translational modification 2-(S-cysteinyl)pyruvic acid O-phosphothioketal. UDP-N-acetyl-alpha-D-glucosamine-binding positions include 124–128 (RPVDQ), Asp-309, and Ile-331.

The protein belongs to the EPSP synthase family. MurA subfamily.

The protein resides in the cytoplasm. It carries out the reaction phosphoenolpyruvate + UDP-N-acetyl-alpha-D-glucosamine = UDP-N-acetyl-3-O-(1-carboxyvinyl)-alpha-D-glucosamine + phosphate. It functions in the pathway cell wall biogenesis; peptidoglycan biosynthesis. In terms of biological role, cell wall formation. Adds enolpyruvyl to UDP-N-acetylglucosamine. The protein is UDP-N-acetylglucosamine 1-carboxyvinyltransferase of Leptothrix cholodnii (strain ATCC 51168 / LMG 8142 / SP-6) (Leptothrix discophora (strain SP-6)).